Consider the following 294-residue polypeptide: Glyceraldehyde-3-phosphate dehydrogenase (294 aa).

Aspartate 19, arginine 63, and threonine 105 together coordinate NAD(+). Residues 134–136, threonine 165, 194–195, and arginine 217 each bind D-glyceraldehyde 3-phosphate; these read SCT and TG. Catalysis depends on cysteine 135, which acts as the Nucleophile.

Belongs to the glyceraldehyde-3-phosphate dehydrogenase family. Homotetramer.

Its subcellular location is the cytoplasm. The catalysed reaction is D-glyceraldehyde 3-phosphate + phosphate + NAD(+) = (2R)-3-phospho-glyceroyl phosphate + NADH + H(+). It participates in carbohydrate degradation; glycolysis; pyruvate from D-glyceraldehyde 3-phosphate: step 1/5. In terms of biological role, catalyzes the oxidative phosphorylation of glyceraldehyde 3-phosphate (G3P) to 1,3-bisphosphoglycerate (BPG) using the cofactor NAD. The first reaction step involves the formation of a hemiacetal intermediate between G3P and a cysteine residue, and this hemiacetal intermediate is then oxidized to a thioester, with concomitant reduction of NAD to NADH. The reduced NADH is then exchanged with the second NAD, and the thioester is attacked by a nucleophilic inorganic phosphate to produce BPG. The chain is Glyceraldehyde-3-phosphate dehydrogenase (gap) from Shimwellia blattae (Escherichia blattae).